A 74-amino-acid chain; its full sequence is Serine rich endogenous peptide 23 (74 aa).

The N-terminal stretch at 1 to 25 is a signal peptide; the sequence is MNKVVVYVLALSILLFFGLPNTTLA. Residues 52–66 carry the SCOOP motif motif; sequence KIAVGGSDSVRAHSK. The SxS motif essential for MIK2 binding signature appears at 58–60; the sequence is SDS.

This sequence belongs to the serine rich endogenous peptide (SCOOP) phytocytokine family. Interacts with MIK2 (via extracellular leucine-rich repeat domain); this interaction triggers the formation of complex between MIK2 and the BAK1/SERK3 and SERK4 coreceptors, and subsequent BAK1 activation by phosphorylation. Mostly expressed in roots, and, to a lower extent, in seedlings shoots.

It is found in the cell membrane. The protein localises to the secreted. It localises to the extracellular space. The protein resides in the apoplast. Functionally, brassicaceae-specific phytocytokine (plant endogenous peptide released into the apoplast) perceived by MIK2 in a BAK1/SERK3 and SERK4 coreceptors-dependent manner, that modulates various physiological and antimicrobial processes including growth prevention and reactive oxygen species (ROS) response regulation. Inhibits root growth. In Arabidopsis thaliana (Mouse-ear cress), this protein is Serine rich endogenous peptide 23.